The chain runs to 1331 residues: DNA-directed RNA polymerase subunit beta' (1331 aa).

Zn(2+)-binding residues include cysteine 60, cysteine 62, cysteine 75, and cysteine 78. Aspartate 535, aspartate 537, and aspartate 539 together coordinate Mg(2+). Residues cysteine 902, cysteine 979, cysteine 986, and cysteine 989 each contribute to the Zn(2+) site.

This sequence belongs to the RNA polymerase beta' chain family. In terms of assembly, the RNAP catalytic core consists of 2 alpha, 1 beta, 1 beta' and 1 omega subunit. When a sigma factor is associated with the core the holoenzyme is formed, which can initiate transcription. Requires Mg(2+) as cofactor. The cofactor is Zn(2+).

It carries out the reaction RNA(n) + a ribonucleoside 5'-triphosphate = RNA(n+1) + diphosphate. In terms of biological role, DNA-dependent RNA polymerase catalyzes the transcription of DNA into RNA using the four ribonucleoside triphosphates as substrates. In Corynebacterium aurimucosum (strain ATCC 700975 / DSM 44827 / CIP 107346 / CN-1) (Corynebacterium nigricans), this protein is DNA-directed RNA polymerase subunit beta'.